A 163-amino-acid polypeptide reads, in one-letter code: Small ribosomal subunit protein bS18c (163 aa).

2 disordered regions span residues 1 to 54 and 121 to 163; these read MYTS…PGDR and ITGP…SSDC. The segment covering 7-48 has biased composition (basic residues); that stretch reads PFHKSKQTFHKSKQTFRKSKQTFRKFKQPFRKPKQPFRRRPR. Residues 140-163 are compositionally biased toward low complexity; that stretch reads NSNRNLRNSNQTLRNNNRNLSSDC.

It belongs to the bacterial ribosomal protein bS18 family. Part of the 30S ribosomal subunit.

The protein resides in the plastid. It localises to the chloroplast. This chain is Small ribosomal subunit protein bS18c, found in Oryza nivara (Indian wild rice).